Reading from the N-terminus, the 596-residue chain is MPKRTLEDTELNPRDNYIKVSSKKSRKEKREKKSKDAEEPATDSTPIDIEVESKEARRERKRLKKAKRAQEAEEEQLPEGNAIESTSDADAAACIKAAKKAEKARLKALKKEGKEEKVDIPESTDSATPISVAPQQNGTTYTEDYNLSGLPQSEIDSFLTTNFITITDPLSASAALRPLIKFDYLPITDSAQRAPFKDFKAPTPIQAAAWPFLLAGRDVIGVAETGSGKTMAFAVPCVRYMSSLPKNQKNKGPRAVVVSPTRELAMQSYEQIVKLAKASGLECVCVYGGVPKDEQIRALKTADIVVATPGRLNDLINQGCADLSKARYVVLDEADRMLDKGFEEEIRKIINTTPSLGKRQTLMFTATWPESVRELASTFMTSPVKIAIGDNPTGDLRANSRIVQKVEVVEPRDKEYRLMQLLKQYQSGSQKDDRILVFCLYKKEATRVEGFIRQKGFRVAGIHGDLSQEQRTRSLEAFKSGNTPVLVATDVAARGLDIPAVKLVINCTFPLTVEDYVHRIGRTGRAGKDGLAITLFTEHDKAQSGALINVLKAANQPVPDELLKFGTTVKKKAHDAYGAFFKNVDTTKKATKITFD.

Over residues 1–17 the composition is skewed to basic and acidic residues; the sequence is MPKRTLEDTELNPRDNY. Disordered stretches follow at residues 1–87 and 115–139; these read MPKR…ESTS and EEKV…QNGT. Residues 21-30 are compositionally biased toward basic residues; sequence SSKKSRKEKR. A coiled-coil region spans residues 47–120; the sequence is IDIEVESKEA…KEGKEEKVDI (74 aa). Positions 123–139 are enriched in polar residues; it reads STDSATPISVAPQQNGT. The Q motif motif lies at 180–207; the sequence is IKFDYLPITDSAQRAPFKDFKAPTPIQA. One can recognise a Helicase ATP-binding domain in the interval 210–386; it reads WPFLLAGRDV…STFMTSPVKI (177 aa). 223 to 230 is a binding site for ATP; sequence AETGSGKT. Residues 332-335 carry the DEAD box motif; the sequence is DEAD. The 150-residue stretch at 417-566 folds into the Helicase C-terminal domain; sequence RLMQLLKQYQ…PVPDELLKFG (150 aa).

The protein belongs to the DEAD box helicase family. DDX5/DBP2 subfamily.

Its subcellular location is the nucleus. The protein resides in the nucleolus. The enzyme catalyses ATP + H2O = ADP + phosphate + H(+). ATP-dependent RNA helicase required for 60S ribosomal subunit synthesis. Involved in efficient pre-rRNA processing, predominantly at site A3, which is necessary for the normal formation of 25S and 5.8S rRNAs. The protein is ATP-dependent RNA helicase dbp3 (dbp3) of Sclerotinia sclerotiorum (strain ATCC 18683 / 1980 / Ss-1) (White mold).